The sequence spans 522 residues: MSRLFRGATIVWVVLRYGLDELVLTSFQKPWLRLLARIVSFGRKLDAPRGQRLREALERLGPIFVKFGQVLSTRRDLLPPDIANELALLQDRVPPFDPDVAVATIERAFRRPVGEVFVSFERVPVASASIAQVHFAIVRDRHGVEREVAVKVLRPGMLPVIDNDLGLMRAMAGWVESLSADGKRLKPRQVVAEFDNYLHDELDLIREAANAAQLRRNMERLGLVRIPEILWDFCHPEVLVMERMKGVPISQIERLRAAGVDIRQLARDGVTIFFTQVFRDGFFHADMHPGNIQVSLEPGSFGRYISLDFGIVGSLTEFDKEYLAQNFTAFFRRDYKRVAELHVESGWVPADTRINELESAIRAVCEPYFDRPLKEISLGMVLMRLFQTSRRFHVEIQPQLVLLQKTLLNIEGLGRQLDPELDLWSTAKPFLEKWMLDQMGPQRLWREVKAESPHFAKMLPELPRLLHDYLHHKPHDHRREMQELLAEQRRTNRLLQSIIYGGMGFVLGLLALQFLIRIRFFH.

Positions 119–497 (SFERVPVASA…QRRTNRLLQS (379 aa)) constitute a Protein kinase domain. ATP is bound by residues 125-133 (VASASIAQV) and K151. The Proton acceptor role is filled by D286. Residues 496–516 (QSIIYGGMGFVLGLLALQFLI) traverse the membrane as a helical segment.

This sequence belongs to the ABC1 family. UbiB subfamily.

The protein localises to the cell inner membrane. It functions in the pathway cofactor biosynthesis; ubiquinone biosynthesis [regulation]. In terms of biological role, is probably a protein kinase regulator of UbiI activity which is involved in aerobic coenzyme Q (ubiquinone) biosynthesis. The chain is Probable protein kinase UbiB from Paracidovorax citrulli (strain AAC00-1) (Acidovorax citrulli).